The chain runs to 414 residues: Sensor protein CutS (414 aa).

Residues 1-15 (MATTPAPPGAPPKPT) show a composition bias toward pro residues. The tract at residues 1 to 21 (MATTPAPPGAPPKPTWDPRSA) is disordered. 2 helical membrane passes run 37–57 (LLYG…IYLL) and 121–141 (SLLA…AMAG). Residues 142 to 194 (RVLSPLGRITRTARAVAGSDLSRRIELDGPDDELKELADTFDDMLERLQRAFT) form the HAMP domain. The region spanning 202–414 (NASHELRTPL…GLVMRVTLPV (213 aa)) is the Histidine kinase domain. His205 is subject to Phosphohistidine; by autocatalysis.

It localises to the cell membrane. The enzyme catalyses ATP + protein L-histidine = ADP + protein N-phospho-L-histidine.. Its function is as follows. Member of the two-component regulatory system CutS/CutR, involved in the regulation of copper metabolism. The sequence is that of Sensor protein CutS (cutS) from Streptomyces coelicolor (strain ATCC BAA-471 / A3(2) / M145).